The primary structure comprises 334 residues: MKQVVYIANSESKNIEVWNLCKSGKMNLIQKIETDGKIQPINIIQKRNLLYAGIFPDNKIITYSINHNGFLEKKNESNIPGKANYISFDKKKEFLFCSSYHSNFISVSPLNKFGIPQNPIQIIYNIEGCHAAKMNYKYNILFVISLKEDCIYLYYLTDFGILKSTEQNILHTQKKSGPRHIIFHPNQDFIYTINELNGTIDVWKIYKKNNVIKVKNIQNIHVLKNRFLKDYWCSDIHITSCGRFLYACDRFFNIISLFHINQNDNKLVFFKSYDTEEQPRSFNINSHNTHLIVAGEKSNTFIIYSISNSTGELKKINVYSTGQRPVWILIHALC.

It belongs to the cycloisomerase 2 family.

The enzyme catalyses 6-phospho-D-glucono-1,5-lactone + H2O = 6-phospho-D-gluconate + H(+). Its pathway is carbohydrate degradation; pentose phosphate pathway; D-ribulose 5-phosphate from D-glucose 6-phosphate (oxidative stage): step 2/3. In terms of biological role, catalyzes the hydrolysis of 6-phosphogluconolactone to 6-phosphogluconate. This is 6-phosphogluconolactonase from Buchnera aphidicola subsp. Acyrthosiphon pisum (strain APS) (Acyrthosiphon pisum symbiotic bacterium).